The primary structure comprises 256 residues: Large ribosomal subunit protein eL8B (256 aa).

Positions Met1–Gly37 are disordered.

This sequence belongs to the eukaryotic ribosomal protein eL8 family. In terms of assembly, component of the large ribosomal subunit (LSU). Mature yeast ribosomes consist of a small (40S) and a large (60S) subunit. The 40S small subunit contains 1 molecule of ribosomal RNA (18S rRNA) and 33 different proteins (encoded by 57 genes). The large 60S subunit contains 3 rRNA molecules (25S, 5.8S and 5S rRNA) and 46 different proteins (encoded by 81 genes).

It is found in the cytoplasm. Component of the ribosome, a large ribonucleoprotein complex responsible for the synthesis of proteins in the cell. The small ribosomal subunit (SSU) binds messenger RNAs (mRNAs) and translates the encoded message by selecting cognate aminoacyl-transfer RNA (tRNA) molecules. The large subunit (LSU) contains the ribosomal catalytic site termed the peptidyl transferase center (PTC), which catalyzes the formation of peptide bonds, thereby polymerizing the amino acids delivered by tRNAs into a polypeptide chain. The nascent polypeptides leave the ribosome through a tunnel in the LSU and interact with protein factors that function in enzymatic processing, targeting, and the membrane insertion of nascent chains at the exit of the ribosomal tunnel. The polypeptide is Large ribosomal subunit protein eL8B (Saccharomyces cerevisiae (strain ATCC 204508 / S288c) (Baker's yeast)).